We begin with the raw amino-acid sequence, 365 residues long: Aminomethyltransferase (365 aa).

The protein belongs to the GcvT family. In terms of assembly, the glycine cleavage system is composed of four proteins: P, T, L and H.

The catalysed reaction is N(6)-[(R)-S(8)-aminomethyldihydrolipoyl]-L-lysyl-[protein] + (6S)-5,6,7,8-tetrahydrofolate = N(6)-[(R)-dihydrolipoyl]-L-lysyl-[protein] + (6R)-5,10-methylene-5,6,7,8-tetrahydrofolate + NH4(+). Its function is as follows. The glycine cleavage system catalyzes the degradation of glycine. This chain is Aminomethyltransferase, found in Yersinia pseudotuberculosis serotype O:1b (strain IP 31758).